Here is a 270-residue protein sequence, read N- to C-terminus: Elongation factor Ts (270 aa).

Positions 81–84 (TDFV) are involved in Mg(2+) ion dislocation from EF-Tu.

Belongs to the EF-Ts family.

Its subcellular location is the cytoplasm. Functionally, associates with the EF-Tu.GDP complex and induces the exchange of GDP to GTP. It remains bound to the aminoacyl-tRNA.EF-Tu.GTP complex up to the GTP hydrolysis stage on the ribosome. In Wigglesworthia glossinidia brevipalpis, this protein is Elongation factor Ts.